A 193-amino-acid chain; its full sequence is ATP synthase subunit delta (193 aa).

The protein belongs to the ATPase delta chain family. In terms of assembly, F-type ATPases have 2 components, F(1) - the catalytic core - and F(0) - the membrane proton channel. F(1) has five subunits: alpha(3), beta(3), gamma(1), delta(1), epsilon(1). F(0) has three main subunits: a(1), b(2) and c(10-14). The alpha and beta chains form an alternating ring which encloses part of the gamma chain. F(1) is attached to F(0) by a central stalk formed by the gamma and epsilon chains, while a peripheral stalk is formed by the delta and b chains.

The protein resides in the cell inner membrane. Its function is as follows. F(1)F(0) ATP synthase produces ATP from ADP in the presence of a proton or sodium gradient. F-type ATPases consist of two structural domains, F(1) containing the extramembraneous catalytic core and F(0) containing the membrane proton channel, linked together by a central stalk and a peripheral stalk. During catalysis, ATP synthesis in the catalytic domain of F(1) is coupled via a rotary mechanism of the central stalk subunits to proton translocation. In terms of biological role, this protein is part of the stalk that links CF(0) to CF(1). It either transmits conformational changes from CF(0) to CF(1) or is implicated in proton conduction. This chain is ATP synthase subunit delta, found in Allorhizobium ampelinum (strain ATCC BAA-846 / DSM 112012 / S4) (Agrobacterium vitis (strain S4)).